The primary structure comprises 136 residues: Ribosome-binding factor A (136 aa).

The protein belongs to the RbfA family. In terms of assembly, monomer. Binds 30S ribosomal subunits, but not 50S ribosomal subunits or 70S ribosomes.

The protein localises to the cytoplasm. Its function is as follows. One of several proteins that assist in the late maturation steps of the functional core of the 30S ribosomal subunit. Associates with free 30S ribosomal subunits (but not with 30S subunits that are part of 70S ribosomes or polysomes). Required for efficient processing of 16S rRNA. May interact with the 5'-terminal helix region of 16S rRNA. The sequence is that of Ribosome-binding factor A from Cellvibrio japonicus (strain Ueda107) (Pseudomonas fluorescens subsp. cellulosa).